A 272-amino-acid chain; its full sequence is Transformer-2 sex-determining protein (272 aa).

Disordered regions lie at residues 21–102 (KHKC…DHPQ) and 182–272 (ITQR…QSRY). The span at 26–41 (HSSATSSPSSAASSES) shows a compositional bias: low complexity. A compositionally biased stretch (basic and acidic residues) spans 87–102 (TSRDRQRMRQARDHPQ). The RRM domain maps to 105–183 (RCIGVFGLNT…RRIRVDYSIT (79 aa)). A linker region spans residues 184–204 (QRAHTPTPGVYMGRPSRPLGR). The span at 205 to 218 (RSRERDYSTRDTSR) shows a compositional bias: basic and acidic residues. The segment covering 238–266 (RKYRSRHRYDRSRSRTRSYSRSRSPRKPV) has biased composition (basic residues).

The protein belongs to the splicing factor SR family. Post-translationally, extensively phosphorylated on serine residues in the RS domain.

Functionally, required for female sex determination in somatic cells and for spermatogenesis in male germ cells. Positive regulator of female-specific splicing and/or polyadenylation of doublesex (dsx) pre-mRNA. Splicing requires an enhancer complex, dsxRE (dsx repeat element: which contains six copies of a 13-nucleotide repeat and a purine-rich enhancer (PRE)). DsxRE is formed through cooperative interactions between tra, tra2 and the sr proteins, and these interactions require both the repeat sequences and PRE. PRE is required for specific binding of tra2 to the dsxRE. Protein-RNA and protein-protein interactions are involved in tra-2 dependent activation and repression of alternative splicing. This is Transformer-2 sex-determining protein (tra2) from Drosophila virilis (Fruit fly).